We begin with the raw amino-acid sequence, 274 residues long: Large ribosomal subunit protein uL2 (274 aa).

Positions 223–274 are disordered; that stretch reads VAMNPVDHPMGGGEGKASGGHPRSRTGLYAKGKKTRNTNKYSKNYILSRKKR.

This sequence belongs to the universal ribosomal protein uL2 family. As to quaternary structure, part of the 50S ribosomal subunit. Forms a bridge to the 30S subunit in the 70S ribosome.

Its function is as follows. One of the primary rRNA binding proteins. Required for association of the 30S and 50S subunits to form the 70S ribosome, for tRNA binding and peptide bond formation. It has been suggested to have peptidyltransferase activity; this is somewhat controversial. Makes several contacts with the 16S rRNA in the 70S ribosome. The protein is Large ribosomal subunit protein uL2 of Amoebophilus asiaticus (strain 5a2).